The chain runs to 447 residues: Phosphoglucosamine mutase (447 aa).

Serine 103 (phosphoserine intermediate) is an active-site residue. Residues serine 103, aspartate 242, aspartate 244, and aspartate 246 each contribute to the Mg(2+) site. Serine 103 is modified (phosphoserine).

The protein belongs to the phosphohexose mutase family. Mg(2+) serves as cofactor. Post-translationally, activated by phosphorylation.

It carries out the reaction alpha-D-glucosamine 1-phosphate = D-glucosamine 6-phosphate. Catalyzes the conversion of glucosamine-6-phosphate to glucosamine-1-phosphate. The protein is Phosphoglucosamine mutase of Dinoroseobacter shibae (strain DSM 16493 / NCIMB 14021 / DFL 12).